Here is a 161-residue protein sequence, read N- to C-terminus: Cyclic pyranopterin monophosphate synthase (161 aa).

Residues 75–77 (LCH) and 113–114 (ME) each bind substrate. The active site involves Asp128.

Belongs to the MoaC family. As to quaternary structure, homohexamer; trimer of dimers.

The enzyme catalyses (8S)-3',8-cyclo-7,8-dihydroguanosine 5'-triphosphate = cyclic pyranopterin phosphate + diphosphate. Its pathway is cofactor biosynthesis; molybdopterin biosynthesis. Its function is as follows. Catalyzes the conversion of (8S)-3',8-cyclo-7,8-dihydroguanosine 5'-triphosphate to cyclic pyranopterin monophosphate (cPMP). In Enterobacter sp. (strain 638), this protein is Cyclic pyranopterin monophosphate synthase.